An 889-amino-acid chain; its full sequence is MDKKEILKEFSADPDKYYNVKLFQEQGFIRKSCAKCGRFFWTLNADRDLCPDDGLDTYSFIGEPPTSKRFDYTQSWKQVEEFFVKNNHTSVSRYPVVCRWRDDLYFTIASVVDFQRVMGSKVVFEFPANPLVVPQTCLRFKDLENVGVTGRHFSSFCMIGQHSVPDLGGYWKDECVDLDYRLLTEQFGINKDEVVFVEDVWAGGGSFGPSLEYFVQGLELGNAVFTEFQGELGKHTTLDQRVIDMGAGLERFAWITMGTPTAYDCCFGPINEKLFGTIGIDSDSEILRKYFTEIAKEIDHYDDLNQVRRLAVKNAGITDEQMQKMITPLEGMYLIADHLRTLIFAITDGALPSNVGGGYNLRMMLRRINATISKLNLKLNIDDLIDLHVDYLKDTYPELDEKRDDVKSILKLESARYEESKVHMKKKADKIKEKGAPSVDELITYYESDGITPEYLKEVDAISEIPSSFYSKLSDLHQSDKKKAIAELPLEGLPETETLFYQDDPMEFSAKVLKVIDDMIVLDRTSFYARGGGQEPDFGSIAGFKVINVDKHADIIVHQLEGGVPKEGETVSCKVDETRRSNITKNHTSTHIINASSRKVLGSWIWQHSAFKDDDHARLDITHHSSLSNDEVQKIEDEANDMIKKNYPVKINYYDRGTAEQKYGFRIYQGGVVPVKSVRIVSIEDKDIEACGGTHVKKTGDIELIKITKTKRIQDGVVRLEFVSGPNAFEYEKQQEQESKRKAEEAVAKEQLEKQREENKSKAREKIPVLLEKVLAGEDVESDGINTKGKLCFTASSDYDDYFHQNFGKKLVGKDSTAAFCGVFEAGPTIRVMVFSGEQSGVNAGEIAKKIASILGGSGGGDAKFAQGGGKDTSKKDEAISKAKSMILG.

Residues His587, His591, Cys691, and His695 each coordinate Zn(2+). 2 disordered regions span residues Gln734–Lys760 and Ala866–Gly889. A compositionally biased stretch (basic and acidic residues) spans Asp872–Ser881.

It belongs to the class-II aminoacyl-tRNA synthetase family. Zn(2+) is required as a cofactor.

The protein resides in the cytoplasm. The enzyme catalyses tRNA(Ala) + L-alanine + ATP = L-alanyl-tRNA(Ala) + AMP + diphosphate. Functionally, catalyzes the attachment of alanine to tRNA(Ala) in a two-step reaction: alanine is first activated by ATP to form Ala-AMP and then transferred to the acceptor end of tRNA(Ala). Also edits incorrectly charged Ser-tRNA(Ala) and Gly-tRNA(Ala) via its editing domain. This Nitrosopumilus maritimus (strain SCM1) protein is Alanine--tRNA ligase.